Here is a 478-residue protein sequence, read N- to C-terminus: Lactate utilization protein B (478 aa).

4Fe-4S ferredoxin-type domains lie at 303 to 333 (GTEF…GHAY) and 352 to 381 (YDDH…LHEQ). Positions 312, 315, 318, 322, 365, 368, and 372 each coordinate [4Fe-4S] cluster.

This sequence belongs to the LutB/YkgF family.

In terms of biological role, is involved in L-lactate degradation and allows cells to grow with lactate as the sole carbon source. Has probably a role as an electron transporter during oxidation of L-lactate. The chain is Lactate utilization protein B from Oceanobacillus iheyensis (strain DSM 14371 / CIP 107618 / JCM 11309 / KCTC 3954 / HTE831).